Reading from the N-terminus, the 91-residue chain is Putative membrane protein insertion efficiency factor (91 aa).

This sequence belongs to the UPF0161 family.

It is found in the cell inner membrane. In terms of biological role, could be involved in insertion of integral membrane proteins into the membrane. This Saccharophagus degradans (strain 2-40 / ATCC 43961 / DSM 17024) protein is Putative membrane protein insertion efficiency factor.